A 166-amino-acid chain; its full sequence is Interferon gamma (166 aa).

Residues 1–23 form the signal peptide; it reads MNYTSYILAFQLCVILCSSGYYC. Glutamine 24 is subject to Pyrrolidone carboxylic acid. N-linked (GlcNAc...) asparagine glycosylation is found at asparagine 39 and asparagine 106.

This sequence belongs to the type II (or gamma) interferon family. Homodimer. Interacts with IFNGR1 (via extracellular domain); this interaction promotes IFNGR1 dimerization. In terms of tissue distribution, released primarily from activated T lymphocytes.

Its subcellular location is the secreted. Its function is as follows. Type II interferon produced by immune cells such as T-cells and NK cells that plays crucial roles in antimicrobial, antiviral, and antitumor responses by activating effector immune cells and enhancing antigen presentation. Primarily signals through the JAK-STAT pathway after interaction with its receptor IFNGR1 to affect gene regulation. Upon IFNG binding, IFNGR1 intracellular domain opens out to allow association of downstream signaling components JAK2, JAK1 and STAT1, leading to STAT1 activation, nuclear translocation and transcription of IFNG-regulated genes. Many of the induced genes are transcription factors such as IRF1 that are able to further drive regulation of a next wave of transcription. Plays a role in class I antigen presentation pathway by inducing a replacement of catalytic proteasome subunits with immunoproteasome subunits. In turn, increases the quantity, quality, and repertoire of peptides for class I MHC loading. Increases the efficiency of peptide generation also by inducing the expression of activator PA28 that associates with the proteasome and alters its proteolytic cleavage preference. Up-regulates as well MHC II complexes on the cell surface by promoting expression of several key molecules such as cathepsins B/CTSB, H/CTSH, and L/CTSL. Participates in the regulation of hematopoietic stem cells during development and under homeostatic conditions by affecting their development, quiescence, and differentiation. The polypeptide is Interferon gamma (IFNG) (Ailuropoda melanoleuca (Giant panda)).